A 1191-amino-acid chain; its full sequence is Phosphatidylinositol 3,4,5-trisphosphate 5-phosphatase 1 (1191 aa).

One can recognise an SH2 domain in the interval 8 to 104 (WNHGNITRSK…GLVTHLQYPV (97 aa)). Residues 122 to 148 (SVMSPPELPPRNIPMSAGPSEAKDLPL) form a disordered region. The SH3-binding 1 signature appears at 127–132 (PELPPR). Phosphoserine is present on serine 246. The short motif at 915–918 (NPNY) is the NPXY motif 1 element. A Phosphotyrosine modification is found at tyrosine 918. A Phosphoserine modification is found at serine 935. Tyrosine 945 is subject to Phosphotyrosine. 2 disordered regions span residues 947 to 994 (QLPK…EARP) and 1021 to 1191 (YGSV…TAMQ). Over residues 962–972 (PPTPPSQPPLS) the composition is skewed to pro residues. Threonine 964 bears the Phosphothreonine mark. Residues serine 967 and serine 972 each carry the phosphoserine modification. The SH3-binding 2 signature appears at 970-975 (PLSPKK). Positions 1015-1029 (MFENPLYGSVSSFPK) are interaction with DAB2. The short motif at 1018-1021 (NPLY) is the NPXY motif 2 element. The residue at position 1021 (tyrosine 1021) is a Phosphotyrosine. Residues 1032-1046 (PRKEQESPKMLRKEP) are compositionally biased toward basic and acidic residues. The SH3-binding 3 signature appears at 1039-1050 (PKMLRKEPPPCP). A compositionally biased stretch (pro residues) spans 1141–1150 (IPAPRPPLPV). Basic and acidic residues predominate over residues 1162–1184 (KGRDYRDNTELPHHGKHRQEEGL).

This sequence belongs to the inositol 1,4,5-trisphosphate 5-phosphatase family. Interacts with tyrosine phosphorylated form of SHC1. Interacts with tyrosine phosphorylated form of DOK1. Interacts with tyrosine phosphorylated form of DOK3. Interacts with tyrosine phosphorylated form of SLAMF1/CD150. Interacts with PTPN11/SHP-2 in response to IL-3. Interacts with receptor EPOR. Interacts with receptors MS4A2/FCER1B and FCER1G. Interacts with receptors FCGR2B and FCGR3. Interacts with receptor FCGR2A, leading to regulate gene expression during the phagocytic process. Interacts with GRB2. Interacts with PLCG1. Interacts with tyrosine kinases SRC and TEC. Interacts with CRKL. Interacts with c-Met/MET. Interacts with MILR1 (tyrosine-phosphorylated). Isoform 5 interacts with IL6ST/gp130. Can weakly interact (via NPXY motif 2) with DAB2 (via PID domain); the interaction is impaired by tyrosine phosphorylation of the NPXY motif. Interacts (via SH2 domain) with tyrosine phosphorylated KLRC1 (via ITIM). Interacts with MPL/TPOR. In terms of processing, tyrosine phosphorylated by the members of the SRC family after exposure to a diverse array of extracellular stimuli such as cytokines, growth factors, antibodies, chemokines, integrin ligands and hypertonic and oxidative stress. Phosphorylated upon IgG receptor FCGR2B-binding. Specifically expressed in immune and hematopoietic cells. Levels vary considerably within this compartment. Lost during erythropoiesis when erythroid cells become Ter119+. Increases substantially with T-cell maturation and when resting B-cells are activated. Also present in mature granulocytes, monocyte/macrophages, mast cells and platelets. Isoform 5 is the only form expressed in embryonic stem (ES) cells and is coexpressed with other isoforms in hematopoietic stem cells, and disappears with differentiation.

It is found in the cytoplasm. Its subcellular location is the cell membrane. The protein localises to the membrane raft. The protein resides in the cytoskeleton. It carries out the reaction a 1,2-diacyl-sn-glycero-3-phospho-(1D-myo-inositol-3,4,5-trisphosphate) + H2O = a 1,2-diacyl-sn-glycero-3-phospho-(1D-myo-inositol-3,4-bisphosphate) + phosphate. The catalysed reaction is a 1,2-diacyl-sn-glycero-3-phospho-(1D-myo-inositol-4,5-bisphosphate) + H2O = a 1,2-diacyl-sn-glycero-3-phospho-(1D-myo-inositol 4-phosphate) + phosphate. The enzyme catalyses 1D-myo-inositol 1,3,4,5-tetrakisphosphate + H2O = 1D-myo-inositol 1,3,4-trisphosphate + phosphate. Its activity is regulated as follows. Activated upon translocation to the sites of synthesis of PtdIns(3,4,5)P3 in the membrane. Functionally, phosphatidylinositol (PtdIns) phosphatase that specifically hydrolyzes the 5-phosphate of phosphatidylinositol-3,4,5-trisphosphate (PtdIns(3,4,5)P3) to produce PtdIns(3,4)P2, thereby negatively regulating the PI3K (phosphoinositide 3-kinase) pathways. Also able to hydrolyze the 5-phosphate of phosphatidylinositol-4,5-bisphosphate (PtdIns(4,5)P3) and inositol 1,3,4,5-tetrakisphosphate. Acts as a negative regulator of B-cell antigen receptor signaling. Mediates signaling from the FC-gamma-RIIB receptor (FCGR2B), playing a central role in terminating signal transduction from activating immune/hematopoietic cell receptor systems. Acts as a negative regulator of myeloid cell proliferation/survival and chemotaxis, mast cell degranulation, immune cells homeostasis, integrin alpha-IIb/beta-3 signaling in platelets and JNK signaling in B-cells. Regulates proliferation of osteoclast precursors, macrophage programming, phagocytosis and activation and is required for endotoxin tolerance. Involved in the control of cell-cell junctions, CD32a signaling in neutrophils and modulation of EGF-induced phospholipase C activity. Key regulator of neutrophil migration, by governing the formation of the leading edge and polarization required for chemotaxis. Modulates FCGR3/CD16-mediated cytotoxicity in NK cells. Mediates the activin/TGF-beta-induced apoptosis through its Smad-dependent expression. In Mus musculus (Mouse), this protein is Phosphatidylinositol 3,4,5-trisphosphate 5-phosphatase 1 (Inpp5d).